Here is a 282-residue protein sequence, read N- to C-terminus: Centromere protein P (282 aa).

The stretch at 1–80 (MEQKYEEDIQ…KDLRRQTEIN (80 aa)) forms a coiled coil.

It belongs to the CENP-P/CTF19 family.

Its subcellular location is the nucleus. The protein localises to the chromosome. The protein resides in the centromere. Functionally, probable component of a centromeric complex involved in assembly of kinetochore proteins, mitotic progression and chromosome segregation. The protein is Centromere protein P (cenpp) of Danio rerio (Zebrafish).